Consider the following 468-residue polypeptide: BTB/POZ domain-containing protein 17 (468 aa).

The N-terminal stretch at 1-16 (MRRFCVVPLLLVLVEA) is a signal peptide. The 70-residue stretch at 51-120 (TDTILRIRTA…FYCGEISVNL (70 aa)) folds into the BTB domain. The region spanning 159–259 (VVSWYHYALR…ISPSQLFQIQ (101 aa)) is the BACK domain.

Its subcellular location is the secreted. In Xenopus tropicalis (Western clawed frog), this protein is BTB/POZ domain-containing protein 17 (btbd17).